Consider the following 321-residue polypeptide: AA9 family lytic polysaccharide monooxygenase A (321 aa).

The signal sequence occupies residues 1-21 (MFRAQSFLPVLALVLRVAAHG). A Cu(2+)-binding site is contributed by histidine 20. Cysteines 71 and 197 form a disulfide. A glycan (N-linked (GlcNAc...) asparagine) is linked at asparagine 72. Histidine 105 serves as a coordination point for Cu(2+). An N-linked (GlcNAc...) asparagine glycan is attached at asparagine 157. O2 contacts are provided by histidine 183 and glutamine 192. Position 194 (tyrosine 194) interacts with Cu(2+). Residues 278–306 (SSSAAATQSSSAAPSSSAIGTSTASSAAA) form a disordered region. Serine 293 is lipidated: GPI-anchor amidated serine. The propeptide at 294–321 (SAIGTSTASSAAASGTAIVDANTCMNSA) is removed in mature form.

It belongs to the polysaccharide monooxygenase AA9 family. The cofactor is Cu(2+).

The protein resides in the cell membrane. The enzyme catalyses [(1-&gt;4)-beta-D-glucosyl]n+m + reduced acceptor + O2 = 4-dehydro-beta-D-glucosyl-[(1-&gt;4)-beta-D-glucosyl]n-1 + [(1-&gt;4)-beta-D-glucosyl]m + acceptor + H2O.. Its function is as follows. Lytic polysaccharide monooxygenase (LPMO) that depolymerizes crystalline and amorphous polysaccharides via the oxidation of scissile alpha- or beta-(1-4)-glycosidic bonds, yielding C1 or C4 oxidation products. Catalysis by LPMOs requires the reduction of the active-site copper from Cu(II) to Cu(I) by a reducing agent and H(2)O(2) or O(2) as a cosubstrate. Has broad specificity, cleaving at any position along the beta-glucan backbone of xyloglucan, regardless of substitutions. Shows minor activity on glucomannan. The protein is AA9 family lytic polysaccharide monooxygenase A of Gloeophyllum trabeum (strain ATCC 11539 / FP-39264 / Madison 617) (Brown rot fungus).